The chain runs to 336 residues: Methionyl-tRNA formyltransferase (336 aa).

112 to 115 (SILP) contributes to the (6S)-5,6,7,8-tetrahydrofolate binding site.

The protein belongs to the Fmt family.

It carries out the reaction L-methionyl-tRNA(fMet) + (6R)-10-formyltetrahydrofolate = N-formyl-L-methionyl-tRNA(fMet) + (6S)-5,6,7,8-tetrahydrofolate + H(+). Its function is as follows. Attaches a formyl group to the free amino group of methionyl-tRNA(fMet). The formyl group appears to play a dual role in the initiator identity of N-formylmethionyl-tRNA by promoting its recognition by IF2 and preventing the misappropriation of this tRNA by the elongation apparatus. The polypeptide is Methionyl-tRNA formyltransferase (Trichodesmium erythraeum (strain IMS101)).